Consider the following 504-residue polypeptide: One cut domain family member 2 (504 aa).

4 disordered regions span residues 29–95, 166–189, 274–332, and 485–504; these read LGTL…GTAA, KFHH…RLSG, EQHL…QLEE, and WQDD…CTKA. Residues 35–56 are compositionally biased toward gly residues; the sequence is PAGGGSGGGGGGGGGGGGGGPG. Residues 168–186 are compositionally biased toward basic residues; sequence HHPHPHHHPHHHHHHHHQR. The CUT DNA-binding region spans 324–410; it reads VATSGQLEEI…QRMSALRLAA (87 aa). The homeobox DNA-binding region spans 426 to 485; the sequence is QKKSRLVFTDLQRRTLFAIFKENKRPSKEMQITISQQLGLELTTVSNFFMNARRRSLEKW. A compositionally biased stretch (low complexity) spans 490-504; the sequence is STGGSSSTSSTCTKA.

The protein belongs to the CUT homeobox family.

The protein localises to the nucleus. Functionally, transcriptional activator. Activates the transcription of a number of liver genes such as HNF3B. The sequence is that of One cut domain family member 2 (ONECUT2) from Homo sapiens (Human).